Here is a 161-residue protein sequence, read N- to C-terminus: Allophycocyanin beta chain (161 aa).

Asn71 bears the N4-methylasparagine mark. Cys81 contacts (2R,3E)-phycocyanobilin.

This sequence belongs to the phycobiliprotein family. In terms of assembly, heterodimer of an alpha and a beta chain. Contains one covalently linked phycocyanobilin chromophore.

The protein resides in the cellular thylakoid membrane. Functionally, light-harvesting photosynthetic bile pigment-protein from the phycobiliprotein complex. Allophycocyanin has a maximum absorption at approximately 650 nanometers. This chain is Allophycocyanin beta chain (apcB), found in Mastigocladus laminosus (Fischerella sp.).